Consider the following 620-residue polypeptide: Protein regulator of cytokinesis 1 (620 aa).

The interval 1–303 (MRRSEVLAEE…IEAIRVELVQ (303 aa)) is required for the interaction with KIF4A. The interval 1-341 (MRRSEVLAEE…QLHDAEIVRL (341 aa)) is dimerization. 3 coiled-coil regions span residues 96–133 (ILQL…ELCE), 211–304 (SLEN…LVQY), and 383–463 (GNLL…TEML). The interval 342–466 (KNYYEVHKEL…QTETEMLYGS (125 aa)) is spectrin-fold. Over residues 446–459 (AKQERQLKNKKQTE) the composition is skewed to basic and acidic residues. The tract at residues 446–488 (AKQERQLKNKKQTETEMLYGSAPRTPSKRRGLAPNTPGKARKL) is disordered. The segment at 467–620 (APRTPSKRRG…GILNSTNIQS (154 aa)) is unstructured, Arg/Lys rich. Phosphothreonine; by CDK1 occurs at positions 470 and 481. Serine 513, arginine 541, and serine 571 each carry phosphoserine. Residues 517–545 (RLPPSGSKPVAASTCSGKKTPRTGRHGAN) form a disordered region. Threonine 578 is modified (phosphothreonine). The segment at 600-620 (LSKASKSDATSGILNSTNIQS) is disordered. Polar residues predominate over residues 606–620 (SDATSGILNSTNIQS). Threonine 616 carries the phosphothreonine; by PLK1 modification.

This sequence belongs to the MAP65/ASE1 family. In terms of assembly, homodimer. Interacts with the C-terminal Rho-GAP domain and the basic region of RACGAP1. The interaction with RACGAP1 inhibits its GAP activity towards CDC42 in vitro, which may be required for maintaining normal spindle morphology. Interacts (via N-terminus) with the C-terminus of CENPE (via C-terminus); the interaction occurs during late mitosis. Interacts (via N-terminus) with KIF4A (via C-terminus); the interaction is required for the progression of mitosis. Interacts (via N-terminus) with KIF23 (via C-terminus); the interaction occurs during late mitosis. Interacts with KIF14 and KIF20A. Interacts with PLK1. Interacts with KIF20B. Interacts with CCDC66. Post-translationally, phosphorylation by CDK1 in early mitosis holds PRC1 in an inactive monomeric state, during the metaphase to anaphase transition, PRC1 is dephosphorylated, promoting interaction with KIF4A, which then translocates PRC1 along mitotic spindles to the plus ends of antiparallel interdigitating microtubules. Dephosphorylation also promotes MT-bundling activity by allowing dimerization. Phosphorylation by CDK1 prevents PLK1-binding: upon degradation of CDK1 at anaphase and dephosphorylation, it is then phosphorylated by PLK1, leading to cytokinesis. Overexpressed in bladder cancer cells.

Its subcellular location is the nucleus. The protein resides in the cytoplasm. The protein localises to the cytoskeleton. It is found in the spindle pole. It localises to the midbody. Its subcellular location is the chromosome. In terms of biological role, key regulator of cytokinesis that cross-links antiparrallel microtubules at an average distance of 35 nM. Essential for controlling the spatiotemporal formation of the midzone and successful cytokinesis. Required for KIF14 localization to the central spindle and midbody. Required to recruit PLK1 to the spindle. Stimulates PLK1 phosphorylation of RACGAP1 to allow recruitment of ECT2 to the central spindle. Acts as an oncogene for promoting bladder cancer cells proliferation, apoptosis inhibition and carcinogenic progression. The chain is Protein regulator of cytokinesis 1 from Homo sapiens (Human).